The chain runs to 723 residues: Probable alpha-fucosidase A (723 aa).

Residues 1–15 (MRSLVLLGMSSLATA) form the signal peptide. 10 N-linked (GlcNAc...) asparagine glycosylation sites follow: N77, N98, N117, N171, N194, N243, N334, N558, N566, and N595.

Belongs to the glycosyl hydrolase 95 family.

It localises to the secreted. The enzyme catalyses an alpha-L-fucoside + H2O = L-fucose + an alcohol. In terms of biological role, alpha-fucosidase involved in degradation of fucosylated xyloglucans. Hydrolyzes alpha-1,2-linked fucose. The sequence is that of Probable alpha-fucosidase A (afcA) from Aspergillus oryzae (strain ATCC 42149 / RIB 40) (Yellow koji mold).